The primary structure comprises 296 residues: Giardin subunit alpha-3 (296 aa).

Annexin repeat units follow at residues 3-72 (DTVT…SNCW), 74-146 (ELPV…TWIK), 153-222 (NNIN…TAHY), and 226-295 (GMNN…VLWR).

The protein belongs to the annexin family. Giardin subunit alpha subfamily.

The protein localises to the cytoplasm. It localises to the cytoskeleton. Its function is as follows. Giardins are involved in parasite attachment to the intestinal mucosa and in the cytoskeletal disassembly and reassembly that marks the transition from infectious trophozoite to transmissible cyst. They may interact with other cytoskeletal proteins such as microtubules in the microribbons or crossbridges, to maintain the integrity of the ventral disk. The protein is Giardin subunit alpha-3 of Giardia intestinalis (Giardia lamblia).